Here is a 582-residue protein sequence, read N- to C-terminus: Transcription factor PCF5 (582 aa).

2 disordered regions span residues 30-78 and 123-195; these read AAGK…QHDH and SPMG…GGGG. A compositionally biased stretch (gly residues) spans 51–64; that stretch reads GGDGGGVGGGGSGG. Residues 213-271 form the TCP domain; it reads RKDRHSKVCTARGPRDRRVRLSAHTAIQFYDVQDRLGYDRPSKAVDWLIKNAKDAIDKL. Disordered stretches follow at residues 283-306, 402-423, and 548-582; these read GAGAGNAAAPPSSSTHPDSAENSD, MFHHQQHRHGGGGGGGNGTTQQ, and RLPARIQGDEEHNGGGGGNGDKPPPPSSVSSASHH.

In terms of assembly, forms homodimers and heterodimers with PCF2.

It is found in the nucleus. In terms of biological role, transcription activator. Binds the promoter core sequence 5'-GGNCC-3'. The chain is Transcription factor PCF5 (PCF5) from Oryza sativa subsp. indica (Rice).